The sequence spans 210 residues: Ribosomal RNA large subunit methyltransferase E (210 aa).

Gly55, Trp57, Asp75, Asp93, and Asp117 together coordinate S-adenosyl-L-methionine. Residue Lys157 is the Proton acceptor of the active site. Positions 175–210 are disordered; the sequence is YRQVKTTKPPSSRKKSSEMYVVGLDFKPKKNKKSKD.

Belongs to the class I-like SAM-binding methyltransferase superfamily. RNA methyltransferase RlmE family.

Its subcellular location is the cytoplasm. It carries out the reaction uridine(2552) in 23S rRNA + S-adenosyl-L-methionine = 2'-O-methyluridine(2552) in 23S rRNA + S-adenosyl-L-homocysteine + H(+). Functionally, specifically methylates the uridine in position 2552 of 23S rRNA at the 2'-O position of the ribose in the fully assembled 50S ribosomal subunit. In Methanobrevibacter smithii (strain ATCC 35061 / DSM 861 / OCM 144 / PS), this protein is Ribosomal RNA large subunit methyltransferase E.